A 419-amino-acid polypeptide reads, in one-letter code: Indole prenyltransferase tdiB (419 aa).

Residue 58 to 59 participates in L-tryptophan binding; it reads PS. Arg81, Lys165, Tyr167, Arg236, Lys238, Tyr240, Tyr330, and Tyr394 together coordinate substrate.

The protein belongs to the tryptophan dimethylallyltransferase family.

It catalyses the reaction didemethylasterriquinone D + dimethylallyl diphosphate = asterriquinone C1 + diphosphate. Its pathway is secondary metabolite biosynthesis. Functionally, indole prenyltransferase; part of the gene cluster that mediates the biosynthesis of terrequinone A, an antitumor agent. The first step in the biosynthetic pathway for terrequinone A is formation of indole pyruvic acid (IPA) from L-tryptophan by the aminotransferase tdiD. The nonribosomal peptide synthase tdiA then immediately converts unstable IPA to didemethylasterriquinone D (DDAQ D), via condensation of 2 IPA molecules. The symmetric connectivity of the 2 IPA molecules is thought to arise by head-to-tail dual Claisen condensations facilitated by the TE domain. TdiB then catalyzes reverse prenylation by transferring dimethylallyl diphosphate to carbon atom 2' of DDAQ D, to yield asterriquinone C-1. Finally, tdiC and tdiE enzymes robustly convert asterriquinone C-1 to terrequinone A via a transformation involving regular prenylation at carbon atom 5, which requires elimination of the hydroxy group on C-5. In Emericella nidulans (strain FGSC A4 / ATCC 38163 / CBS 112.46 / NRRL 194 / M139) (Aspergillus nidulans), this protein is Indole prenyltransferase tdiB.